The primary structure comprises 253 residues: Adenylate kinase (253 aa).

15–20 (GSGKGT) contributes to the ATP binding site. Residues 35 to 64 (SSGDLLRNAVSQNTPLGQEIKSYLDQGKLL) are NMP. Residues Ser36, Arg41, 62 to 64 (KLL), 103 to 106 (GFPR), and Gln110 each bind AMP. The LID stretch occupies residues 143–176 (SRYICPSCQGIYNKQQGFSRCPKCLVELTRRSDD). Arg144 lines the ATP pocket. Residues Cys147 and Cys150 each contribute to the Zn(2+) site. 153–154 (IY) contacts ATP. Zn(2+)-binding residues include Cys163 and Cys166. The AMP site is built by Arg173 and Arg184. Ala212 contacts ATP.

The protein belongs to the adenylate kinase family. In terms of assembly, monomer.

The protein resides in the cytoplasm. It catalyses the reaction AMP + ATP = 2 ADP. It functions in the pathway purine metabolism; AMP biosynthesis via salvage pathway; AMP from ADP: step 1/1. In terms of biological role, catalyzes the reversible transfer of the terminal phosphate group between ATP and AMP. Plays an important role in cellular energy homeostasis and in adenine nucleotide metabolism. In Chlamydia muridarum (strain MoPn / Nigg), this protein is Adenylate kinase.